A 468-amino-acid polypeptide reads, in one-letter code: Uronate isomerase (468 aa).

This sequence belongs to the metallo-dependent hydrolases superfamily. Uronate isomerase family.

The enzyme catalyses D-glucuronate = D-fructuronate. It carries out the reaction aldehydo-D-galacturonate = keto-D-tagaturonate. The protein operates within carbohydrate metabolism; pentose and glucuronate interconversion. The polypeptide is Uronate isomerase (Endomicrobium trichonymphae).